The primary structure comprises 128 residues: Glycine cleavage system H protein (128 aa).

A Lipoyl-binding domain is found at 24 to 106; the sequence is SVTVGITAHA…YGDGWFFKIK (83 aa). Lys-65 carries the post-translational modification N6-lipoyllysine.

It belongs to the GcvH family. As to quaternary structure, the glycine cleavage system is composed of four proteins: P, T, L and H. (R)-lipoate serves as cofactor.

The glycine cleavage system catalyzes the degradation of glycine. The H protein shuttles the methylamine group of glycine from the P protein to the T protein. In Chromobacterium violaceum (strain ATCC 12472 / DSM 30191 / JCM 1249 / CCUG 213 / NBRC 12614 / NCIMB 9131 / NCTC 9757 / MK), this protein is Glycine cleavage system H protein.